The primary structure comprises 112 residues: MNLSIFSAIIFSITIASSAIPISENYVSWSSDSNCLDFDDSRDPNAVCEATTTWKRSENSSCIVSVYYVKKEKSSGTSNGIPQCSKTPCDATEKIVVDCETAFREKLANINH.

A signal peptide spans 1 to 19 (MNLSIFSAIIFSITIASSA). N-linked (GlcNAc...) asparagine glycosylation occurs at Asn59.

This sequence belongs to the UPF0375 family.

It is found in the secreted. The polypeptide is UPF0375 protein R05A10.4 (Caenorhabditis elegans).